Reading from the N-terminus, the 278-residue chain is Sulfur carrier protein FdhD (278 aa).

The active-site Cysteine persulfide intermediate is Cys-117.

Belongs to the FdhD family.

The protein localises to the cytoplasm. In terms of biological role, required for formate dehydrogenase (FDH) activity. Acts as a sulfur carrier protein that transfers sulfur from IscS to the molybdenum cofactor prior to its insertion into FDH. This Variovorax paradoxus (strain S110) protein is Sulfur carrier protein FdhD.